A 265-amino-acid chain; its full sequence is Glycine/sarcosine N-methyltransferase (265 aa).

S-adenosyl-L-methionine contacts are provided by residues Tyr28, Trp36, Arg45, Ala69, Asp90, 116 to 117 (DW), and Leu134. Positions 136, 169, and 208 each coordinate substrate.

This sequence belongs to the class I-like SAM-binding methyltransferase superfamily. Glycine N-methyltransferase family. As to quaternary structure, monomer.

It catalyses the reaction glycine + 2 S-adenosyl-L-methionine = N,N-dimethylglycine + 2 S-adenosyl-L-homocysteine + 2 H(+). The enzyme catalyses glycine + S-adenosyl-L-methionine = sarcosine + S-adenosyl-L-homocysteine + H(+). The catalysed reaction is sarcosine + S-adenosyl-L-methionine = N,N-dimethylglycine + S-adenosyl-L-homocysteine + H(+). The protein operates within amine and polyamine biosynthesis; betaine biosynthesis via glycine pathway; betaine from glycine: step 1/3. Its pathway is amine and polyamine biosynthesis; betaine biosynthesis via glycine pathway; betaine from glycine: step 2/3. Its activity is regulated as follows. Inhibited by acetate, dimethylglycine and S-adenosyl-L-homocysteine. Catalyzes the methylation of glycine and sarcosine to sarcosine and dimethylglycine, respectively, with S-adenosylmethionine (AdoMet) acting as the methyl donor. In Aphanothece halophytica, this protein is Glycine/sarcosine N-methyltransferase.